The following is a 232-amino-acid chain: MTEPTDFQLLELATPYALHAVSDEERLDIERRLSAAPAPVAAAFDEEVRSVRETMSVVSAATAAQPPAELRQALLAAAEPAQSRRQPRWRTAVFASAAAIAVGLGAFGLGVLTRPSASPTVAEQVLAAPDVQTVSGRLGGGTATVMFSRDRNAGVLVMNNVPPPSPGTVYQMWLVDAKGPTSAGTMGPTAVTPSTKATLTDLGDSTTLAFTVEPGTGSTKPTGTVLAELPLR.

At 1–91 the chain is on the cytoplasmic side; sequence MTEPTDFQLL…QSRRQPRWRT (91 aa). The helical transmembrane segment at 92-112 threads the bilayer; the sequence is AVFASAAAIAVGLGAFGLGVL. At 113–232 the chain is on the extracellular side; sequence TRPSASPTVA…GTVLAELPLR (120 aa).

The protein belongs to the anti-sigma-K factor family.

It localises to the cell membrane. Functionally, an anti-sigma factor for extracytoplasmic function (ECF) sigma factor SigK. ECF sigma factors are held in an inactive form by an anti-sigma factor until released by regulated intramembrane proteolysis (RIP). RIP occurs when an extracytoplasmic signal triggers a concerted proteolytic cascade to transmit information and elicit cellular responses. The membrane-spanning regulatory substrate protein is first cut extracytoplasmically (site-1 protease, S1P), then within the membrane itself (site-2 protease, S2P, Rip1), while cytoplasmic proteases finish degrading the regulatory protein, liberating the sigma factor. This Mycobacterium ulcerans (strain Agy99) protein is Anti-sigma-K factor RskA (rskA).